We begin with the raw amino-acid sequence, 545 residues long: MAKRIIYNENARRALEKGMDILAESVAVTLGPKGRNVVLEKKFGAPQIVNDGVTIAKEIELEDHIENTGVALIRQAASKTNDAAGDGTTTATVLAHAMVKEGLRNVAAGANPIALKRGIDKATQFLVEKIAEHARPVEDSKAIAQVAAISAGNDEEVGRMIADAMDKVGKEGVISLEEAKSMTTELEVTEGMRFDKGYISPYFATDTERMEAVLDEPFVLVTDKKITLVQDLVPILEQVARAGKPLVIIAEDIEKEALATLVVNRLRGVLNVAAVKAPGFGDRSKAMLEDIAVLTAGQVIAEDAGLKLENAKLDMLGKARRITITKDHTTIVAEGNEKAVKARCEQIRRQIEETDSSYDKEKLQERLAKLAGGVAVIKVGAATETEMKDRKLRLEDAINATKAAVEEGIVPGGGTTLVHLAPELSNWAAEHLTGEELIGANIVERALSAPLRRIAENAGQNGAIIVERVKEKPFDVGYDAAKDEYVNMFDAGIVDPAKVTRSALQNAASIAGMVLTTECIIVDKPEPKENNPAGSGAGMGGDFDY.

ATP contacts are provided by residues 29 to 32 (TLGP), 86 to 90 (DGTTT), Gly413, 479 to 481 (DAA), and Asp495. The disordered stretch occupies residues 525-545 (PEPKENNPAGSGAGMGGDFDY). A compositionally biased stretch (gly residues) spans 535–545 (SGAGMGGDFDY).

Belongs to the chaperonin (HSP60) family. As to quaternary structure, forms a cylinder of 14 subunits composed of two heptameric rings stacked back-to-back. Interacts with the co-chaperonin GroES.

Its subcellular location is the cytoplasm. The enzyme catalyses ATP + H2O + a folded polypeptide = ADP + phosphate + an unfolded polypeptide.. Its function is as follows. Together with its co-chaperonin GroES, plays an essential role in assisting protein folding. The GroEL-GroES system forms a nano-cage that allows encapsulation of the non-native substrate proteins and provides a physical environment optimized to promote and accelerate protein folding. This is Chaperonin GroEL 1 from Thermostichus vulcanus (Synechococcus vulcanus).